Consider the following 622-residue polypeptide: Serine/threonine-protein kinase MAK (622 aa).

In terms of domain architecture, Protein kinase spans 4 to 284; sequence YTTMKQLGDG…ASQALKHPYF (281 aa). ATP contacts are provided by residues 10–18 and Lys-33; that span reads LGDGTYGSV. Asp-125 serves as the catalytic Proton acceptor. At Thr-157 the chain carries Phosphothreonine; by autocatalysis. Tyr-159 is modified (phosphotyrosine; by autocatalysis). Residues 301-371 form a disordered region; sequence QTLHKQLQPL…QGHQKPPQTM (71 aa). Positions 336–355 are enriched in polar residues; sequence QPKQGHQPLQTIQPPQNTVT.

The protein belongs to the protein kinase superfamily. CMGC Ser/Thr protein kinase family. CDC2/CDKX subfamily. In terms of assembly, interacts with AR and CDK20. Found in a complex containing MAK, AR and NCOA3. Interacts with FZR1 (via WD repeats). Interacts with RP1. Mg(2+) is required as a cofactor. Post-translationally, autophosphorylated. Phosphorylated on serine and threonine residues. In pre- and postmeiotic male germ cells in testis. In photoreceptor cells of the retina and in the olfactory receptors, and in certain epithelia of the respiratory tract and choroid plexus (brain).

It is found in the nucleus. The protein localises to the cytoplasm. Its subcellular location is the cytoskeleton. The protein resides in the microtubule organizing center. It localises to the centrosome. It is found in the spindle. The protein localises to the midbody. Its subcellular location is the cell projection. The protein resides in the cilium. It localises to the photoreceptor outer segment. It is found in the photoreceptor inner segment. It carries out the reaction L-seryl-[protein] + ATP = O-phospho-L-seryl-[protein] + ADP + H(+). The enzyme catalyses L-threonyl-[protein] + ATP = O-phospho-L-threonyl-[protein] + ADP + H(+). Its function is as follows. Essential for the regulation of ciliary length and required for the long-term survival of photoreceptors. Could have an important function in sensory cells and in spermatogenesis. May participate in signaling pathways used in visual and olfactory sensory transduction. Phosphorylates FZR1 in a cell cycle-dependent manner. Plays a role in the transcriptional coactivation of AR. The chain is Serine/threonine-protein kinase MAK (Mak) from Mus musculus (Mouse).